The following is a 119-amino-acid chain: Large ribosomal subunit protein bL20 (119 aa).

This sequence belongs to the bacterial ribosomal protein bL20 family.

Functionally, binds directly to 23S ribosomal RNA and is necessary for the in vitro assembly process of the 50S ribosomal subunit. It is not involved in the protein synthesizing functions of that subunit. This Xanthomonas oryzae pv. oryzae (strain KACC10331 / KXO85) protein is Large ribosomal subunit protein bL20.